Here is a 282-residue protein sequence, read N- to C-terminus: Osteoclast-associated immunoglobulin-like receptor (282 aa).

Positions 1 to 18 (MALVLILQLLTLWPLCHT) are cleaved as a signal peptide. 2 Ig-like domains span residues 22 to 116 (PSVP…SQPS) and 126 to 219 (ELPR…SWEG). Asn48 carries an N-linked (GlcNAc...) asparagine glycan. A disulfide bond links Cys53 and Cys100. Residue Asn145 is glycosylated (N-linked (GlcNAc...) asparagine). Residues 221 to 282 (GPEARPASSA…PAPPPSDPGV (62 aa)) are disordered. A compositionally biased stretch (pro residues) spans 273–282 (PAPPPSDPGV).

This sequence belongs to the leukocyte receptor complex/polymeric immunoglobulin receptor (PIR/LRC) family.

It is found in the secreted. It localises to the cell membrane. Regulator of osteoclastogenesis which plays an important bone-specific function in osteoclast differentiation. This Homo sapiens (Human) protein is Osteoclast-associated immunoglobulin-like receptor (OSCAR).